A 182-amino-acid chain; its full sequence is MAATMMNKTVVLSKGCTKPSAVPKVSINRKGFLNTAMNKKREMMVWQPFNNKMFETFSYLPPLTDEQISKQVDYILANSWTPCLEFAASDQAYAGNENCIRMGPVASTYQDNRYWTMWKLPMFGCTDGSQVLSEIQACTKAFPDAYIRLVCFDANRQVQISGFLVHRPPSATDYRLPADRQV.

The transit peptide at 1–41 (MAATMMNKTVVLSKGCTKPSAVPKVSINRKGFLNTAMNKKR) directs the protein to the chloroplast.

It belongs to the RuBisCO small chain family. Heterohexadecamer of 8 large and 8 small subunits.

The protein localises to the plastid. It is found in the chloroplast. Functionally, ruBisCO catalyzes two reactions: the carboxylation of D-ribulose 1,5-bisphosphate, the primary event in carbon dioxide fixation, as well as the oxidative fragmentation of the pentose substrate. Both reactions occur simultaneously and in competition at the same active site. Although the small subunit is not catalytic it is essential for maximal activity. This Acetabularia peniculus (Green alga) protein is Ribulose bisphosphate carboxylase small subunit, chloroplastic 4.